The sequence spans 189 residues: Phosphoheptose isomerase (189 aa).

The region spanning 34-189 (LADSLAGGRK…CDLVEKRLFP (156 aa)) is the SIS domain. 49-51 (NGG) contacts substrate. 2 residues coordinate Zn(2+): histidine 58 and glutamate 62. Residues glutamate 62, 91–92 (ND), 117–119 (STS), serine 122, and glutamine 169 each bind substrate. Residues glutamine 169 and histidine 177 each coordinate Zn(2+).

The protein belongs to the SIS family. GmhA subfamily. As to quaternary structure, homotetramer. It depends on Zn(2+) as a cofactor.

It is found in the cytoplasm. It carries out the reaction 2 D-sedoheptulose 7-phosphate = D-glycero-alpha-D-manno-heptose 7-phosphate + D-glycero-beta-D-manno-heptose 7-phosphate. The protein operates within carbohydrate biosynthesis; D-glycero-D-manno-heptose 7-phosphate biosynthesis; D-glycero-alpha-D-manno-heptose 7-phosphate and D-glycero-beta-D-manno-heptose 7-phosphate from sedoheptulose 7-phosphate: step 1/1. In terms of biological role, catalyzes the isomerization of sedoheptulose 7-phosphate in D-glycero-D-manno-heptose 7-phosphate. The polypeptide is Phosphoheptose isomerase (Geobacter sulfurreducens (strain ATCC 51573 / DSM 12127 / PCA)).